We begin with the raw amino-acid sequence, 283 residues long: Gap junction alpha-6 protein (283 aa).

Over 1-23 the chain is Cytoplasmic; sequence MSDWSALHQLLEKVQPYSTAGGK. A helical membrane pass occupies residues 24–41; sequence VWIKVLFIFRILLLGTAI. Residues 42-76 are Extracellular-facing; it reads ESAWSDEQFEFHCNTQQPGCENVCYDHAFPISHVR. Residues 77–99 traverse the membrane as a helical segment; it reads LWVLQVIFVSVPILLYLAHVYYV. Residues 100-150 lie on the Cytoplasmic side of the membrane; sequence VRQNKKLNKQEEELEAAHFNEASVERHLETIAGEQFKCGSEEQSKVKMRGR. The helical transmembrane segment at 151–173 threads the bilayer; sequence LLLTYMASIFFKSVFEMAFLLIQ. Over 174–208 the chain is Extracellular; that stretch reads WYIYGFTLSALYICEQSPCPRRVDCFLSRPTEKTI. The chain crosses the membrane as a helical span at residues 209 to 231; sequence FILFMFVVSVVSFVLDIIELFYV. The Cytoplasmic segment spans residues 232–283; that stretch reads LFKAIKNRMRKAEDEVYCDELPCPSHVSSSTVLTTIDSSEQAVPVELSSVCI.

Belongs to the connexin family. Alpha-type (group II) subfamily. In terms of assembly, a connexon is composed of a hexamer of connexins.

The protein resides in the cell membrane. It is found in the cell junction. Its subcellular location is the gap junction. In terms of biological role, one gap junction consists of a cluster of closely packed pairs of transmembrane channels, the connexons, through which materials of low MW diffuse from one cell to a neighboring cell. The chain is Gap junction alpha-6 protein (Gja6) from Mus musculus (Mouse).